We begin with the raw amino-acid sequence, 177 residues long: MSSESESGGDFHEMREPRIEKVVVHMGIGHGGRDLANAEDILGEITGQMPVRTKAKRTVGEFDIREGDPIGAKVTLRDEMAEEFLQTALPLAELATSQFDDTGNFSFGVEEHTEFPSQEYDPSIGIYGLDVTVNLVRPGYRVAKRDKASRSIPTKHRLNPADAVAFIESTYDVEVSE.

Belongs to the universal ribosomal protein uL5 family. Part of the 50S ribosomal subunit. Interacts with protein L18 and the 5S rRNA, and probably with tRNAs. Forms a bridge to the 30S subunit in the 70S ribosome.

In terms of biological role, this is 1 of 5 proteins that mediates the attachment of the 5S rRNA onto the large ribosomal subunit, stabilizing the orientation of adjacent RNA domains. Forms part of the central protuberance. Modeling places the A and P site tRNAs in close proximity to this protein; the 5S rRNA and some of its associated proteins might help stabilize positioning of ribosome-bound tRNAs. In the 70S ribosome it is thought to contact protein S13 of the 30S subunit (bridge B1b), connecting the 2 subunits; this bridge is implicated in subunit movement. The polypeptide is Large ribosomal subunit protein uL5 (rpl5) (Haloarcula marismortui (strain ATCC 43049 / DSM 3752 / JCM 8966 / VKM B-1809) (Halobacterium marismortui)).